A 73-amino-acid chain; its full sequence is MRRFVFLAFVLVLFVIANLDSSSAQVNFSPDWGQGKRSGSSDTCAVCAQTMAQVYRLLQGLEAKLGQSRNYSR.

A signal peptide spans M1–A24.

It belongs to the scoloptoxin-22 family. Contains 1 disulfide bond. Expressed by the venom gland.

It localises to the secreted. In Cormocephalus westwoodi (Westwood's green centipede), this protein is U-scoloptoxin(22)-Cw1a.